We begin with the raw amino-acid sequence, 272 residues long: 5'-nucleotidase SurE (272 aa).

Residues Asp8, Asp9, Ser39, and Asn96 each coordinate a divalent metal cation.

This sequence belongs to the SurE nucleotidase family. The cofactor is a divalent metal cation.

Its subcellular location is the cytoplasm. The enzyme catalyses a ribonucleoside 5'-phosphate + H2O = a ribonucleoside + phosphate. Nucleotidase that shows phosphatase activity on nucleoside 5'-monophosphates. This Heliobacterium modesticaldum (strain ATCC 51547 / Ice1) protein is 5'-nucleotidase SurE.